A 328-amino-acid polypeptide reads, in one-letter code: Malate dehydrogenase (328 aa).

11–17 (GAAGQIG) lines the NAD(+) pocket. Substrate-binding residues include R94 and R100. Residues N107, Q114, and 131–133 (VGN) each bind NAD(+). Positions 133 and 164 each coordinate substrate. Catalysis depends on H189, which acts as the Proton acceptor.

The protein belongs to the LDH/MDH superfamily. MDH type 2 family.

It catalyses the reaction (S)-malate + NAD(+) = oxaloacetate + NADH + H(+). Its function is as follows. Catalyzes the reversible oxidation of malate to oxaloacetate. This is Malate dehydrogenase from Acinetobacter baumannii (strain SDF).